Consider the following 204-residue polypeptide: Small ribosomal subunit protein eS8 (204 aa).

The protein belongs to the eukaryotic ribosomal protein eS8 family.

This chain is Small ribosomal subunit protein eS8 (RPS8), found in Griffithsia japonica (Red alga).